A 290-amino-acid chain; its full sequence is 3-hydroxyacyl-thioester dehydratase Y (290 aa).

Positions 147 to 169 are disordered; sequence FGGARGERPAAPEFPDRHPDARI. Basic and acidic residues predominate over residues 151-169; that stretch reads RGERPAAPEFPDRHPDARI. Residues 161-271 enclose the MaoC-like domain; the sequence is PDRHPDARID…AVFRTEVAGS (111 aa).

It belongs to the enoyl-CoA hydratase/isomerase family.

The enzyme catalyses a (3R)-3-hydroxyacyl-CoA = a (2E)-enoyl-CoA + H2O. The catalysed reaction is (3R)-hydroxyhexanoyl-CoA = (2E)-hexenoyl-CoA + H2O. It carries out the reaction (2E)-octenoyl-CoA + H2O = (3R)-hydroxyoctanoyl-CoA. It catalyses the reaction (3R)-3-hydroxydecanoyl-CoA = (2E)-decenoyl-CoA + H2O. The enzyme catalyses (3R)-3-hydroxydodecanoyl-CoA = (2E)-dodecenoyl-CoA + H2O. The catalysed reaction is (3R)-hydroxyhexadecanoyl-CoA = (2E)-hexadecenoyl-CoA + H2O. In terms of biological role, shows trans-enoyl-CoA hydratase/3-hydroxyacyl-CoA dehydratase activity. In vitro, can hydrate various enoyl-CoA such as (2E)-hexenoyl-CoA, (2E)-octenoyl-CoA, (2E)-decenoyl-CoA, (2E)-dodecenoyl-CoA and (2E)-hexadecenoyl-CoA. May contribute to the persistence of the tuberculosis infection by inducing COX-2 expression in macrophages through MAPK-NF-kappaB signaling pathway. This chain is 3-hydroxyacyl-thioester dehydratase Y, found in Mycobacterium tuberculosis (strain ATCC 25618 / H37Rv).